We begin with the raw amino-acid sequence, 113 residues long: Ribonuclease P protein component (113 aa).

This sequence belongs to the RnpA family. As to quaternary structure, consists of a catalytic RNA component (M1 or rnpB) and a protein subunit.

It catalyses the reaction Endonucleolytic cleavage of RNA, removing 5'-extranucleotides from tRNA precursor.. RNaseP catalyzes the removal of the 5'-leader sequence from pre-tRNA to produce the mature 5'-terminus. It can also cleave other RNA substrates such as 4.5S RNA. The protein component plays an auxiliary but essential role in vivo by binding to the 5'-leader sequence and broadening the substrate specificity of the ribozyme. The polypeptide is Ribonuclease P protein component (Ligilactobacillus salivarius (strain UCC118) (Lactobacillus salivarius)).